A 225-amino-acid polypeptide reads, in one-letter code: Two-component response regulator PhoP (225 aa).

The region spanning 2–116 (KLLVVEDEAL…ELEARLNALL (115 aa)) is the Response regulatory domain. D51 is modified (4-aspartylphosphate). The segment at residues 124–222 (QSTIEAGPLV…VRGQGYLFTE (99 aa)) is a DNA-binding region (ompR/PhoB-type).

Functionally, member of the two-component regulatory system PhoP/PhoQ that plays a role in the regulation of resistance towards polymyxin B and cationic antimicrobial peptides in response to limiting concentrations of Mg(2+). Functions as a transcriptional activator by direct binding to a cis-acting sequence upstream of the target gene promoters including oprH and pmrH promoters. The sequence is that of Two-component response regulator PhoP (phoP) from Pseudomonas aeruginosa (strain ATCC 15692 / DSM 22644 / CIP 104116 / JCM 14847 / LMG 12228 / 1C / PRS 101 / PAO1).